The primary structure comprises 196 residues: Imidazoleglycerol-phosphate dehydratase (196 aa).

It belongs to the imidazoleglycerol-phosphate dehydratase family.

Its subcellular location is the cytoplasm. The enzyme catalyses D-erythro-1-(imidazol-4-yl)glycerol 3-phosphate = 3-(imidazol-4-yl)-2-oxopropyl phosphate + H2O. It functions in the pathway amino-acid biosynthesis; L-histidine biosynthesis; L-histidine from 5-phospho-alpha-D-ribose 1-diphosphate: step 6/9. This is Imidazoleglycerol-phosphate dehydratase from Solidesulfovibrio magneticus (strain ATCC 700980 / DSM 13731 / RS-1) (Desulfovibrio magneticus).